Consider the following 1683-residue polypeptide: MRCIGISNRDFVEGVSGGSWVDIVLEHGSCVTTMAKNKPTLDFELIKTEAKQPATLRKYCIEAKLTNTTTDSRCPTQGEPTLNEEQDKRFVCKHSMVDRGWGNGCGLFGKGGIVTCAMFTCKKNMEGKIVQPENLEYTVVITPHSGEEHAVGNDTGKHGKEVKITPQSSITEAELTGYGTVTMECSPRTGLDFNEMVLLQMEDKAWLVHRQWFLDLPLPWLPGADTQGSNWIQKETLVTFKNPHAKKQDVVVLGSQEGAMHTALTGATEIQMSSGNLLFTGHLKCRLRMDKLQLKGMSYSMCTGKFKIVKEIAETQHGTIVIRVQYEGDGSPCKIPFEIMDLEKRHVLGRLITVNPIVTEKDSPVNIEAEPPFGDSYIIIGVEPGQLKLDWFKKGSSIGQMFETTMRGAKRMAILGDTAWDFGSLGGVFTSIGKALHQVFGAIYGAAFSGVSWTMKILIGVIITWIGMNSRSTSLSVSLVLVGIVTLYLGVMVQADSGCVVSWKNKELKCGSGIFVTDNVHTWTEQYKFQPESPSKLASAIQKAHEEGICGIRSVTRLENLMWKQITSELNHILSENEVKLTIMTGDIKGIMQVGKRSLRPQPTELRYSWKTWGKAKMLSTELHNQTFLIDGPETAECPNTNRAWNSLEVEDYGFGVFTTNIWLRLREKQDVFCDSKLMSAAIKDNRAVHADMGYWIESALNDTWKIEKASFIEVKSCHWPKSHTLWSNGVLESEMVIPKNFAGPVSQHNNRPGYYTQTAGPWHLGKLEMDFDFCEGTTVVVTEDCGNRGPSLRTTTASGKLITEWCCRSCTLPPLRYRGEDGCWYGMEIRPLKEKEENLVSSLVTAGHGQIDNFSLGILGMALFLEEMLRTRVGTKHAILLVAVSFVTLITGNMSFRDLGRVMVMVGATMTDDIGMGVTYLALLAAFRVRPTFAAGLLLRKLTSKELMMTTIGIVLLSQSSIPETILELTDALALGMMVLKMVRNMEKYQLAVTIMAILCVPNAVILQNAWKVSCTILAVVSVSPLLLTSSQQKADWIPLALTIKGLNPTAIFLTTLSRTSKKRAGVLWDVPSPPPVGKAELEDGAYRIKQKGILGYSQIGAGVYKEGTFHTMWHVTRGAVLMHKGKRIEPSWADVKKDLISYGGGWKLEGEWKEGEEVQVLALEPGKNPRAVQTKPGLFRTNTGTIGAVSLDFSPGTSGSPIVDKKGKVVGLYGNGVVTRSGAYVSAIAQTEKSIEDNPEIEDDIFRKRRLTIMDLHPGAGKTKRYLPAIVREAIKRGLRTLILAPTRVVAAEMEEALRGLPIRYQTPAIRAEHTGREIVDLMCHATFTMRLLSPIRVPNYNLIIMDEAHFTDPASIAARGYISTRVEMGEAAGIFMTATPPGSRDPFPQSNAPIMDEEREIPERSWNSGHEWVTDFKGKTVWFVPSIKTGNDIAACLRKNGKRVIQLSRKTFDSEYVKTRTNDWDFVVTTDISEMGANFKAERVIDPRRCMKPVILTDGEERVILAGPMPVTHSSAAQRRGRIGRNPRNENDQYIYMGEPLENDEDCAHWKEAKMLLDNINTPEGIIPSIFEPEREKVDAIDGEYRLRGEARKTFVDLMRRGDLPVWLAYKVAAEGINYADRRWCFDGTRNNQILEENVEVEIWTKEGERKKLKPRWLDARIYSDPLALKEFKEFAAGRK.

Over 1–445 (MRCIGISNRD…LHQVFGAIYG (445 aa)) the chain is Extracellular. Intrachain disulfides connect Cys3/Cys30, Cys60/Cys121, Cys74/Cys105, and Cys92/Cys116. Asn67 carries an N-linked (GlcNAc...) asparagine; by host glycan. Residues 98-111 (DRGWGNGCGLFGKG) form a fusion peptide region. Asn153 carries N-linked (GlcNAc...) asparagine; by host glycosylation. Cystine bridges form between Cys185–Cys285 and Cys302–Cys333. Residues 446-466 (AAFSGVSWTMKILIGVIITWI) traverse the membrane as a helical segment. The Cytoplasmic segment spans residues 467 to 472 (GMNSRS). Residues 473–493 (TSLSVSLVLVGIVTLYLGVMV) form a helical membrane-spanning segment. Topologically, residues 494-915 (QADSGCVVSW…MVGATMTDDI (422 aa)) are extracellular. 6 disulfide bridges follow: Cys499-Cys510, Cys550-Cys638, Cys674-Cys718, Cys775-Cys824, Cys786-Cys808, and Cys807-Cys811. N-linked (GlcNAc...) asparagine; by host glycosylation is present at Asn702. Residues 916–940 (GMGVTYLALLAAFRVRPTFAAGLLL) form a helical membrane-spanning segment. At 941–946 (RKLTSK) the chain is on the cytoplasmic side. A helical membrane pass occupies residues 947–965 (ELMMTTIGIVLLSQSSIPE). At 966–989 (TILELTDALALGMMVLKMVRNMEK) the chain is on the lumenal side. A helical transmembrane segment spans residues 990–1010 (YQLAVTIMAILCVPNAVILQN). Ala1011 is a topological domain (cytoplasmic). Residues 1012–1030 (WKVSCTILAVVSVSPLLLT) traverse the membrane as a helical segment. Topologically, residues 1031-1037 (SSQQKAD) are lumenal. Residues 1038-1058 (WIPLALTIKGLNPTAIFLTTL) form a helical membrane-spanning segment. Over 1059-1683 (SRTSKKRAGV…EFKEFAAGRK (625 aa)) the chain is Cytoplasmic. The 178-residue stretch at 1066–1243 (AGVLWDVPSP…EKSIEDNPEI (178 aa)) folds into the Peptidase S7 domain. Residues His1116, Asp1140, and Ser1200 each act as charge relay system; for serine protease NS3 activity in the active site. A Helicase ATP-binding domain is found at 1245-1401 (DDIFRKRRLT…QSNAPIMDEE (157 aa)). The segment at 1249–1252 (RKRR) is important for RNA-binding. Position 1258–1265 (1258–1265 (LHPGAGKT)) interacts with ATP. The DEAH box signature appears at 1349–1352 (DEAH). Positions 1411 to 1582 (SGHEWVTDFK…IFEPEREKVD (172 aa)) constitute a Helicase C-terminal domain.

As to quaternary structure, capsid protein C: Homodimer. Interacts (via N-terminus) with host EXOC1 (via C-terminus); this interaction results in EXOC1 degradation through the proteasome degradation pathway. Protein prM: Forms heterodimers with envelope protein E in the endoplasmic reticulum and Golgi. Homodimer; in the endoplasmic reticulum and Golgi. Interacts with protein prM. Interacts with non-structural protein 1. In terms of assembly, homodimer; Homohexamer when secreted. Interacts with envelope protein E. As to quaternary structure, interacts (via N-terminus) with serine protease NS3. Non-structural protein 2B: Forms a heterodimer with serine protease NS3. May form homooligomers. Forms a heterodimer with NS2B. Interacts with NS4B. Interacts with unphosphorylated RNA-directed RNA polymerase NS5; this interaction stimulates RNA-directed RNA polymerase NS5 guanylyltransferase activity. Interacts with host SHFL. Specific enzymatic cleavages in vivo yield mature proteins. Cleavages in the lumen of endoplasmic reticulum are performed by host signal peptidase, wereas cleavages in the cytoplasmic side are performed by the Serine protease NS3. Signal cleavage at the 2K-4B site requires a prior NS3 protease-mediated cleavage at the 4A-2K site. In terms of processing, N-glycosylated. The excreted form is glycosylated and this is required for efficient secretion of the protein from infected cells. Post-translationally, N-glycosylated. Specific enzymatic cleavages in vivo yield mature proteins. Cleavages in the lumen of endoplasmic reticulum are performed by host signal peptidase, wereas cleavages in the cytoplasmic side are performed by serine protease NS3. Signal cleavage at the 2K-4B site requires a prior NS3 protease-mediated cleavage at the 4A-2K site.

It localises to the virion membrane. The protein resides in the host endoplasmic reticulum membrane. The protein localises to the secreted. The enzyme catalyses Selective hydrolysis of -Xaa-Xaa-|-Yaa- bonds in which each of the Xaa can be either Arg or Lys and Yaa can be either Ser or Ala.. It catalyses the reaction a ribonucleoside 5'-triphosphate + H2O = a ribonucleoside 5'-diphosphate + phosphate + H(+). The catalysed reaction is ATP + H2O = ADP + phosphate + H(+). In terms of biological role, binds to host cell surface receptor and mediates fusion between viral and cellular membranes. Envelope protein is synthesized in the endoplasmic reticulum in the form of heterodimer with protein prM. They play a role in virion budding in the ER, and the newly formed immature particle is covered with 60 spikes composed of heterodimer between precursor prM and envelope protein E. The virion is transported to the Golgi apparatus where the low pH causes dissociation of PrM-E heterodimers and formation of E homodimers. prM-E cleavage is inefficient, and many virions are only partially matured. These uncleaved prM would play a role in immune evasion. Involved in immune evasion, pathogenesis and viral replication. Once cleaved off the polyprotein, is targeted to three destinations: the viral replication cycle, the plasma membrane and the extracellular compartment. Essential for viral replication. Required for formation of the replication complex and recruitment of other non-structural proteins to the ER-derived membrane structures. Excreted as a hexameric lipoparticle that plays a role against host immune response. Antagonizing the complement function. Binds to the host macrophages and dendritic cells. Inhibits signal transduction originating from Toll-like receptor 3 (TLR3). Its function is as follows. Disrupts the host endothelial glycocalyx layer of host pulmonary microvascular endothelial cells, inducing degradation of sialic acid and shedding of heparan sulfate proteoglycans. NS1 induces expression of sialidases, heparanase, and activates cathepsin L, which activates heparanase via enzymatic cleavage. These effects are probably linked to the endothelial hyperpermeability observed in severe dengue disease. Functionally, component of the viral RNA replication complex that functions in virion assembly and antagonizes the host immune response. In terms of biological role, serine protease subunit NS2B: Required cofactor for the serine protease function of NS3. May have membrane-destabilizing activity and form viroporins. Displays three enzymatic activities: serine protease, NTPase and RNA helicase. NS3 serine protease, in association with NS2B, performs its autocleavage and cleaves the polyprotein at dibasic sites in the cytoplasm: C-prM, NS2A-NS2B, NS2B-NS3, NS3-NS4A, NS4A-2K and NS4B-NS5. NS3 RNA helicase binds RNA and unwinds dsRNA in the 3' to 5' direction. This chain is Genome polyprotein, found in Aedimorphus (Red guenon).